Reading from the N-terminus, the 237-residue chain is Protein GrpE (237 aa).

The tract at residues 1–65 is disordered; that stretch reads MTDSYKLPDN…DAREDDRDPT (65 aa). A compositionally biased stretch (basic and acidic residues) spans 55-65; that stretch reads VDAREDDRDPT.

Belongs to the GrpE family. As to quaternary structure, homodimer.

It localises to the cytoplasm. Its function is as follows. Participates actively in the response to hyperosmotic and heat shock by preventing the aggregation of stress-denatured proteins, in association with DnaK and GrpE. It is the nucleotide exchange factor for DnaK and may function as a thermosensor. Unfolded proteins bind initially to DnaJ; upon interaction with the DnaJ-bound protein, DnaK hydrolyzes its bound ATP, resulting in the formation of a stable complex. GrpE releases ADP from DnaK; ATP binding to DnaK triggers the release of the substrate protein, thus completing the reaction cycle. Several rounds of ATP-dependent interactions between DnaJ, DnaK and GrpE are required for fully efficient folding. This chain is Protein GrpE, found in Corynebacterium efficiens (strain DSM 44549 / YS-314 / AJ 12310 / JCM 11189 / NBRC 100395).